The following is a 1558-amino-acid chain: Hybrid PKS-NRPS synthetase TAS1 (1558 aa).

Residues 27–392 (YPMTKAQESL…RGLETPRAQV (366 aa)) are condensation (C) domain. Residues 522–919 (TYKELNERSN…TITDVMPEVT (398 aa)) form an adenylation (A) domain region. Positions 995 to 1028 (TSGSSSSATPSLVSSGSTTCRSPSTSSCSDSRSA) are disordered. In terms of domain architecture, Carrier spans 1027–1104 (SASPAITSAV…GQVDLLCGSE (78 aa)). O-(pantetheine 4'-phosphoryl)serine is present on Ser-1063. The segment at 1116 to 1144 (LGRGRTKSPAKIVDSQGRSSPSTIPSGGR) is disordered. A compositionally biased stretch (polar residues) spans 1131 to 1140 (QGRSSPSTIP). One can recognise a Ketosynthase family 3 (KS3) domain in the interval 1145 to 1558 (KSEIAIVGIS…GVNAHCVLRS (414 aa)). Catalysis depends on for beta-ketoacyl synthase activity residues Cys-1308, His-1444, and Asn-1484.

In the N-terminal section; belongs to the NRP synthetase family. The cofactor is pantetheine 4'-phosphate.

The catalysed reaction is acetoacetyl-CoA + L-isoleucine + ATP = tenuazonic acid + AMP + diphosphate + CoA + 2 H(+). In terms of biological role, hybrid PKS-NRPS synthetase that mediates the biosynthesis of the toxin tenuazonic acid (TeA), an inhibitor of protein biosynthesis on ribosomes by suppressing the release of new protein. TAS1 alone is sufficient for TeA synthesis via the condensation of isoleucine (Ile) with acetoacetyl-CoA by the N-terminal NRPS module and subsequent cyclization conducted by the C-terminal KS domain. The protein is Hybrid PKS-NRPS synthetase TAS1 of Gloeophyllum trabeum (strain ATCC 11539 / FP-39264 / Madison 617) (Brown rot fungus).